Reading from the N-terminus, the 338-residue chain is DNA-directed RNA polymerase subunit alpha (338 aa).

The tract at residues 1 to 234 (MIQKNWQELI…DQLQLFINFE (234 aa)) is alpha N-terminal domain (alpha-NTD). The tract at residues 250–338 (FNKNLLRKVD…ELAKKLEEPY (89 aa)) is alpha C-terminal domain (alpha-CTD).

Belongs to the RNA polymerase alpha chain family. Homodimer. The RNAP catalytic core consists of 2 alpha, 1 beta, 1 beta' and 1 omega subunit. When a sigma factor is associated with the core the holoenzyme is formed, which can initiate transcription.

The catalysed reaction is RNA(n) + a ribonucleoside 5'-triphosphate = RNA(n+1) + diphosphate. DNA-dependent RNA polymerase catalyzes the transcription of DNA into RNA using the four ribonucleoside triphosphates as substrates. This chain is DNA-directed RNA polymerase subunit alpha, found in Paramagnetospirillum magneticum (strain ATCC 700264 / AMB-1) (Magnetospirillum magneticum).